The chain runs to 140 residues: Large ribosomal subunit protein bL19 (140 aa).

The span at 113-126 shows a compositional bias: basic and acidic residues; that stretch reads RIAERQDRTADGKI. The disordered stretch occupies residues 113–140; that stretch reads RIAERQDRTADGKIKKGGKSAPAPTAAE.

It belongs to the bacterial ribosomal protein bL19 family.

This protein is located at the 30S-50S ribosomal subunit interface and may play a role in the structure and function of the aminoacyl-tRNA binding site. This chain is Large ribosomal subunit protein bL19, found in Xanthobacter autotrophicus (strain ATCC BAA-1158 / Py2).